Here is an 81-residue protein sequence, read N- to C-terminus: CLAVATA3/ESR (CLE)-related protein 5 (81 aa).

Residues 1–26 (MATLILKQTLIILLIIFSLQTLSSQA) form the signal peptide. A hydroxyproline mark is found at Pro73 and Pro76. Pro76 carries O-linked (Ara...) hydroxyproline glycosylation.

This sequence belongs to the CLV3/ESR signal peptide family. In terms of processing, the O-glycosylation (arabinosylation) of the hydroxyproline Pro-76 enhances binding affinity of the CLE5p peptide for its receptor. Mostly expressed in roots, and, to a lower extent, in seedlings, stems, apex, flowers and siliques.

The protein localises to the secreted. The protein resides in the extracellular space. Extracellular signal peptide that regulates cell fate. The sequence is that of CLAVATA3/ESR (CLE)-related protein 5 from Arabidopsis thaliana (Mouse-ear cress).